The chain runs to 372 residues: MSKSESPKEPEQLRKLFIGGLSFETTDESLRSHFEQWGTLTDCVVMRDPNTKRSRGFGFVTYATVEEVDAAMNARPHKVDGRVVEPKRAVSREDSQRPGAHLTVKKIFVGGIKEDTEEHHLRDYFEQYGKIEVIEIMTDRGSGKKRGFAFVTFDDHDSVDKIVIQKYHTVNGHNCEVRKALSKQEMASASSSQRGRSGSGNFGGGRGGGFGGNDNFGRGGNFSGRGGFGGSRGGGGYGGSGDGYNGFGNDGGYGGGGPGYSGGSRGYGSGGQGYGNQGSGYGGSGSYDSYNNGGGGGFGGGSGSNFGGGGSYNDFGNYNNQSSNFGPMKGGNFGGRSSGPYGGGGQYFAKPRNQGGYGGSSSSSSYGSGRRF.

Position 1 is an N-acetylmethionine (Met-1). Ser-2 carries the N-acetylserine; in Heterogeneous nuclear ribonucleoprotein A1, N-terminally processed modification. A Phosphoserine modification is found at Ser-2. Lys-3 is modified (N6-acetyllysine; alternate). Lys-3 participates in a covalent cross-link: Glycyl lysine isopeptide (Lys-Gly) (interchain with G-Cter in SUMO2); alternate. Residues Ser-4 and Ser-6 each carry the phosphoserine modification. Residues 4–94 are globular A domain; the sequence is SESPKEPEQL…EPKRAVSRED (91 aa). Lys-8 participates in a covalent cross-link: Glycyl lysine isopeptide (Lys-Gly) (interchain with G-Cter in SUMO2). 2 RRM domains span residues 14-97 and 105-184; these read RKLF…DSQR and KKIF…LSKQ. Phosphoserine is present on Ser-22. Lys-78 is covalently cross-linked (Glycyl lysine isopeptide (Lys-Gly) (interchain with G-Cter in SUMO2)). Residues 95–185 are globular B domain; it reads SQRPGAHLTV…EVRKALSKQE (91 aa). A Glycyl lysine isopeptide (Lys-Gly) (interchain with G-Cter in SUMO) cross-link involves residue Lys-113. Residues Lys-179 and Lys-183 each participate in a glycyl lysine isopeptide (Lys-Gly) (interchain with G-Cter in SUMO2) cross-link. Residues 182-216 form a disordered region; the sequence is SKQEMASASSSQRGRSGSGNFGGGRGGGFGGNDNF. At Ser-192 the chain carries Phosphoserine; by MKNK2. The residue at position 194 (Arg-194) is an Asymmetric dimethylarginine; alternate. Arg-194 is modified (dimethylated arginine; alternate). An Omega-N-methylarginine; alternate modification is found at Arg-194. Gly residues predominate over residues 197–216; sequence SGSGNFGGGRGGGFGGNDNF. At Ser-199 the chain carries Phosphoserine. 4 positions are modified to asymmetric dimethylarginine; alternate: Arg-206, Arg-218, Arg-225, and Arg-232. Position 206 is a dimethylated arginine; alternate (Arg-206). Omega-N-methylarginine; alternate occurs at positions 206, 218, 225, and 232. The tract at residues 218–240 is RNA-binding RGG-box; sequence RGGNFSGRGGFGGSRGGGGYGGS. Arg-225 carries the dimethylated arginine; alternate modification. Residues 317–372 are disordered; sequence NYNNQSSNFGPMKGGNFGGRSSGPYGGGGQYFAKPRNQGGYGGSSSSSSYGSGRRF. The tract at residues 320–357 is nuclear targeting sequence (M9); sequence NQSSNFGPMKGGNFGGRSSGPYGGGGQYFAKPRNQGGY. Residues 328–346 are compositionally biased toward gly residues; that stretch reads MKGGNFGGRSSGPYGGGGQ. Arg-336 carries the omega-N-methylarginine modification. At Ser-337 the chain carries Phosphoserine. Lys-350 is modified (N6-acetyllysine; alternate). Lys-350 is covalently cross-linked (Glycyl lysine isopeptide (Lys-Gly) (interchain with G-Cter in SUMO2); alternate). Arg-352 carries the post-translational modification Omega-N-methylarginine. The span at 360–372 shows a compositional bias: low complexity; the sequence is SSSSSSYGSGRRF. Ser-361 is subject to Phosphoserine. Ser-362, Ser-363, and Ser-364 each carry phosphoserine; by MKNK2. 2 positions are modified to phosphoserine: Ser-365 and Ser-368. Arg-370 carries the omega-N-methylarginine modification.

As to quaternary structure, identified in the spliceosome C complex. Identified in a IGF2BP1-dependent mRNP granule complex containing untranslated mRNAs. Interacts with SEPT6. Interacts with C9orf72. Interacts with KHDRBS1. Interacts with UBQLN2. Interacts with PPIA/CYPA. Interacts (via the RGG-box) with the HOXB-AS3 peptide; the interaction inhibits binding of HNRNPA1 to the intronic sequences flanking exon 9 of the PKM gene, preventing inclusion of exon 9 and promoting inclusion of exon 10 which suppresses formation of the PKM M2 isoform and promotes production of the M1 isoform. In terms of assembly, (Microbial infection) Interacts with HCV NS5B and with the 5'-UTR and 3'-UTR of HCV RNA. (Microbial infection) May interact with SARS-CoV Nucleoprotein. Arg-194, Arg-206 and Arg-225 are dimethylated, probably to asymmetric dimethylarginine. In terms of processing, sumoylated.

It localises to the nucleus. The protein localises to the cytoplasm. Its function is as follows. Involved in the packaging of pre-mRNA into hnRNP particles, transport of poly(A) mRNA from the nucleus to the cytoplasm and modulation of splice site selection. Plays a role in the splicing of pyruvate kinase PKM by binding repressively to sequences flanking PKM exon 9, inhibiting exon 9 inclusion and resulting in exon 10 inclusion and production of the PKM M2 isoform. Binds to the IRES and thereby inhibits the translation of the apoptosis protease activating factor APAF1. May bind to specific miRNA hairpins. (Microbial infection) May play a role in HCV RNA replication. Functionally, (Microbial infection) Cleavage by Enterovirus 71 protease 3C results in increased translation of apoptosis protease activating factor APAF1, leading to apoptosis. In Homo sapiens (Human), this protein is Heterogeneous nuclear ribonucleoprotein A1 (HNRNPA1).